The sequence spans 628 residues: WW domain-containing adapter protein with coiled-coil (628 aa).

Disordered regions lie at residues 1–130, 152–338, and 417–532; these read MVMY…DDWS, EKPK…PQSP, and NQSP…SARS. Residues 37–49 show a composition bias toward basic and acidic residues; it reads SSDHRHDKMRDST. Residues 74 to 84 are compositionally biased toward basic residues; it reads GKAKSMHLHRV. A compositionally biased stretch (low complexity) spans 101 to 121; the sequence is NHSAIHSSNSHSSTPSKTSDS. The 34-residue stretch at 123 to 156 folds into the WW domain; it reads YDPADDWSEHISSSGKKYYYNCRTEVSQWEKPKE. Basic and acidic residues-rich tracts occupy residues 152–168 and 176–185; these read EKPK…KETS and PKDRDYRREA. The segment covering 199-213 has biased composition (polar residues); that stretch reads DTSTMLPQNILSQTS. A compositionally biased stretch (basic and acidic residues) spans 214–227; that stretch reads RHNDRDYRLPRTDS. Low complexity-rich tracts occupy residues 230–260 and 299–331; these read SAAP…TVQP and SDKS…TVPV. The span at 420-446 shows a compositional bias: polar residues; the sequence is PMSLTSDASSPRSYVSPRISTPQTNTV. Residues 467–486 show a composition bias toward low complexity; the sequence is GSKQGSSAQTASQQSSAADK. The span at 511–532 shows a compositional bias: polar residues; the sequence is PNHNSSTCASSTSAPQNSSARS. Residues 599-625 are a coiled coil; sequence QATLREQRILFLRQQIKELEKLKNQNS.

It is found in the nucleus. Acts as a linker between gene transcription and histone H2B monoubiquitination at 'Lys-120' (H2BK120ub1). Positive regulator of amino acid starvation-induced autophagy. Positively regulates MTOR activity. May negatively regulate the ubiquitin proteasome pathway. The sequence is that of WW domain-containing adapter protein with coiled-coil (wac) from Xenopus tropicalis (Western clawed frog).